Consider the following 185-residue polypeptide: MQLEVHKRLEEKMTKTLGVLKDDFNSIRAGKANPSMLDRITVDYYGSITPLKQVASVSAPEPRLLIIQPYDPSVINGIEKALMMSDLGLNPSNDGKIIRLNIPQLTEERRKELTKVVKRVAEEGRVALRNGRRDANEQLKKMEKDSELTEDDLKQAQEEVQKITDKFNKQVDEMLVKKELEILEV.

Residues 132-152 (RRDANEQLKKMEKDSELTEDD) are disordered.

Belongs to the RRF family.

The protein localises to the cytoplasm. Its function is as follows. Responsible for the release of ribosomes from messenger RNA at the termination of protein biosynthesis. May increase the efficiency of translation by recycling ribosomes from one round of translation to another. The protein is Ribosome-recycling factor of Alkaliphilus metalliredigens (strain QYMF).